Here is a 487-residue protein sequence, read N- to C-terminus: Probable nuclear hormone receptor HR3 (487 aa).

Positions 48–123 (IIPCKVCGDK…LGMSRDAVKF (76 aa)) form a DNA-binding region, nuclear receptor. 2 consecutive NR C4-type zinc fingers follow at residues 51–71 (CKVC…CEGC) and 87–111 (CPRN…LQKC). The interval 145–176 (MRAQSDAAPDSSVYDTQTPSSSDQLHHNNYNS) is disordered. The segment covering 157–167 (VYDTQTPSSSD) has biased composition (polar residues). In terms of domain architecture, NR LBD spans 237–480 (INDVLIKTLA…PALYKELFSI (244 aa)).

The protein belongs to the nuclear hormone receptor family. NR1 subfamily.

It is found in the nucleus. Putative receptor whose ligand is not yet known. The sequence is that of Probable nuclear hormone receptor HR3 from Drosophila melanogaster (Fruit fly).